Consider the following 325-residue polypeptide: Thiamine-monophosphate kinase (325 aa).

The Mg(2+) site is built by Asp30, Ser45, Thr46, and Asp47. Residue His54 coordinates substrate. Mg(2+) contacts are provided by Asp75 and Asp122. ATP is bound by residues 121-122 (GD) and Arg146. Asp212 contacts Mg(2+). Ser214 is an ATP binding site. Asp215 serves as a coordination point for Mg(2+). Substrate-binding residues include Glu263 and Tyr319.

Belongs to the thiamine-monophosphate kinase family.

The catalysed reaction is thiamine phosphate + ATP = thiamine diphosphate + ADP. It functions in the pathway cofactor biosynthesis; thiamine diphosphate biosynthesis; thiamine diphosphate from thiamine phosphate: step 1/1. Functionally, catalyzes the ATP-dependent phosphorylation of thiamine-monophosphate (TMP) to form thiamine-pyrophosphate (TPP), the active form of vitamin B1. This Escherichia coli O157:H7 protein is Thiamine-monophosphate kinase.